We begin with the raw amino-acid sequence, 389 residues long: S-adenosylmethionine synthase (389 aa).

ATP is bound at residue His-15. A Mg(2+)-binding site is contributed by Asp-17. Glu-43 contributes to the K(+) binding site. The L-methionine site is built by Glu-56 and Gln-99. A flexible loop region spans residues 99 to 109; that stretch reads QSPDIAQGVNE. ATP contacts are provided by residues 166 to 168, 234 to 235, Asp-243, 249 to 250, Ala-266, and Lys-270; these read DAK, RF, and RK. Asp-243 serves as a coordination point for L-methionine. Residue Lys-274 participates in L-methionine binding.

Belongs to the AdoMet synthase family. As to quaternary structure, homotetramer; dimer of dimers. Mg(2+) serves as cofactor. Requires K(+) as cofactor.

It is found in the cytoplasm. The catalysed reaction is L-methionine + ATP + H2O = S-adenosyl-L-methionine + phosphate + diphosphate. Its pathway is amino-acid biosynthesis; S-adenosyl-L-methionine biosynthesis; S-adenosyl-L-methionine from L-methionine: step 1/1. In terms of biological role, catalyzes the formation of S-adenosylmethionine (AdoMet) from methionine and ATP. The overall synthetic reaction is composed of two sequential steps, AdoMet formation and the subsequent tripolyphosphate hydrolysis which occurs prior to release of AdoMet from the enzyme. The protein is S-adenosylmethionine synthase of Chromobacterium violaceum (strain ATCC 12472 / DSM 30191 / JCM 1249 / CCUG 213 / NBRC 12614 / NCIMB 9131 / NCTC 9757 / MK).